The primary structure comprises 120 residues: Large ribosomal subunit protein bL19 (120 aa).

Belongs to the bacterial ribosomal protein bL19 family.

Functionally, this protein is located at the 30S-50S ribosomal subunit interface and may play a role in the structure and function of the aminoacyl-tRNA binding site. This Nostoc punctiforme (strain ATCC 29133 / PCC 73102) protein is Large ribosomal subunit protein bL19.